A 239-amino-acid chain; its full sequence is tRNA (guanine-N(1)-)-methyltransferase (239 aa).

Residues Gly108 and 127–132 contribute to the S-adenosyl-L-methionine site; that span reads LGDYVL.

It belongs to the RNA methyltransferase TrmD family. As to quaternary structure, homodimer.

It localises to the cytoplasm. The enzyme catalyses guanosine(37) in tRNA + S-adenosyl-L-methionine = N(1)-methylguanosine(37) in tRNA + S-adenosyl-L-homocysteine + H(+). Its function is as follows. Specifically methylates guanosine-37 in various tRNAs. This is tRNA (guanine-N(1)-)-methyltransferase from Streptococcus pneumoniae (strain P1031).